The following is a 236-amino-acid chain: Uridylate kinase (236 aa).

Residue 9 to 12 (KISG) participates in ATP binding. Residue G51 coordinates UMP. Positions 52 and 56 each coordinate ATP. Residues D71 and 132 to 139 (TGNSHFTT) each bind UMP. ATP contacts are provided by Y166 and D169.

The protein belongs to the UMP kinase family. Homohexamer.

Its subcellular location is the cytoplasm. It catalyses the reaction UMP + ATP = UDP + ADP. Its pathway is pyrimidine metabolism; CTP biosynthesis via de novo pathway; UDP from UMP (UMPK route): step 1/1. With respect to regulation, inhibited by UTP. In terms of biological role, catalyzes the reversible phosphorylation of UMP to UDP. The polypeptide is Uridylate kinase (Mycoplasmoides gallisepticum (strain R(low / passage 15 / clone 2)) (Mycoplasma gallisepticum)).